Here is a 683-residue protein sequence, read N- to C-terminus: Putative boron transporter 5 (683 aa).

The Cytoplasmic portion of the chain corresponds to 1 to 38; sequence MEEERVEGSKRPFQGIIRDVKGRALCYKQDWIAGLRSG. A helical transmembrane segment spans residues 39 to 59; the sequence is FGILAPTTYVFFASALPVIAF. The Extracellular segment spans residues 60–80; the sequence is GEQLSHDTERSLSTVETLAST. A helical transmembrane segment spans residues 81–101; it reads ALCGVIHSLLGGQPLLILGVA. Topologically, residues 102–126 are cytoplasmic; it reads EPTVLMYKYLYDFAKGRPELGKQLY. A helical membrane pass occupies residues 127 to 147; sequence LAWVAWVCVWTALLLFLMAIF. Topologically, residues 148-158 are extracellular; the sequence is NMAYIINRFTR. A helical membrane pass occupies residues 159-179; that stretch reads IAGELFGMLIAVLFLQQTIKG. Residues 180-200 are Cytoplasmic-facing; it reads MVSEFRIPKGEDSKLEKYQFE. Residues 201-221 traverse the membrane as a helical segment; it reads WLYTNGLLGLIFTVGLVYTAL. The Extracellular portion of the chain corresponds to 222 to 238; the sequence is KSRKARSWPYGTGCCRS. The helical transmembrane segment at 239-259 threads the bilayer; the sequence is FVADYGVPLMVVVWTALSFST. Residues 260 to 294 are Cytoplasmic-facing; it reads PSKLPSGVPRRLVSPLPWDSVSLTHWTVIKDMGKV. A helical transmembrane segment spans residues 295-315; sequence SPGYIFAAFIPALMIAGLYFF. Topologically, residues 316 to 335 are extracellular; that stretch reads DHSVVSQLAQQKEFNLKNPS. The helical transmembrane segment at 336 to 356 threads the bilayer; that stretch reads AYHYDILLLGFMVLICGMLGL. At 357–477 the chain is on the cytoplasmic side; the sequence is PPSNGVLPQS…EQRVSNLLQS (121 aa). A helical membrane pass occupies residues 478-498; the sequence is LLVIGAVFALPVIKLIPTSLL. The Extracellular segment spans residues 499 to 565; the sequence is WGYFAYMAID…QILYFGLCYG (67 aa). Residues 566–586 traverse the membrane as a helical segment; the sequence is VTWIPVAGIMFPVLFFLLVAI. Over 587 to 683 the chain is Cytoplasmic; it reads RQYLLPKLFK…GDGDMSSSRE (97 aa).

It belongs to the anion exchanger (TC 2.A.31.3) family.

It is found in the membrane. In terms of biological role, putative boron transporter. Boron is essential for maintaining the integrity of plants cell walls. The sequence is that of Putative boron transporter 5 (BOR5) from Arabidopsis thaliana (Mouse-ear cress).